We begin with the raw amino-acid sequence, 1411 residues long: DNA-directed RNA polymerase subunit beta' (1411 aa).

Residues Cys69, Cys71, Cys84, and Cys87 each coordinate Zn(2+). Residues Asp461, Asp463, and Asp465 each coordinate Mg(2+). Positions 809, 883, 890, and 893 each coordinate Zn(2+).

Belongs to the RNA polymerase beta' chain family. The RNAP catalytic core consists of 2 alpha, 1 beta, 1 beta' and 1 omega subunit. When a sigma factor is associated with the core the holoenzyme is formed, which can initiate transcription. Mg(2+) is required as a cofactor. It depends on Zn(2+) as a cofactor.

It carries out the reaction RNA(n) + a ribonucleoside 5'-triphosphate = RNA(n+1) + diphosphate. DNA-dependent RNA polymerase catalyzes the transcription of DNA into RNA using the four ribonucleoside triphosphates as substrates. The sequence is that of DNA-directed RNA polymerase subunit beta' from Ehrlichia ruminantium (strain Gardel).